The sequence spans 456 residues: Protein trichome birefringence-like 25 (456 aa).

Residues 26-42 (QIFLKSVAFFLLIGLAY) form a helical; Signal-anchor for type II membrane protein membrane-spanning segment. The GDS motif motif lies at 172–174 (GDS). Residues 426-440 (DCLHWCLPGPIDSWN) carry the DCXHWCLPGXXDXWN motif motif.

This sequence belongs to the PC-esterase family. TBL subfamily.

It localises to the membrane. Functionally, may be involved in the O-acetylation of mannan. May act as a bridging protein that binds pectin and other cell wall polysaccharides. Probably involved in maintaining esterification of pectins. This Arabidopsis thaliana (Mouse-ear cress) protein is Protein trichome birefringence-like 25 (TBL25).